Consider the following 841-residue polypeptide: Translation initiation factor IF-2 (841 aa).

Residues 87 to 254 (RKKKVFVQRS…KRNAHGFQSP (168 aa)) are disordered. The segment covering 96 to 135 (SPEEIEAERKREMDERRAVENAARQKAEEEAKRRAEEDAR) has biased composition (basic and acidic residues). Residues 136–175 (SQPAASQSAPAAAEPVAAAEPVREAAPAAAPAPASAAPSA) are compositionally biased toward low complexity. Basic and acidic residues-rich tracts occupy residues 176-217 (DARK…EKAP) and 225-234 (TTDEESDSFR). The span at 235 to 248 (RGGRGKGKLKKRNA) shows a compositional bias: basic residues. Residues 341-510 (SRAPVVTVMG…LLQAEVLELK (170 aa)) form the tr-type G domain. Residues 350-357 (GHVDHGKT) form a G1 region. A GTP-binding site is contributed by 350–357 (GHVDHGKT). Residues 375–379 (GITQH) form a G2 region. Residues 396 to 399 (DTPG) form a G3 region. GTP-binding positions include 396–400 (DTPGH) and 450–453 (NKID). The interval 450-453 (NKID) is G4. The G5 stretch occupies residues 486-488 (SAK).

This sequence belongs to the TRAFAC class translation factor GTPase superfamily. Classic translation factor GTPase family. IF-2 subfamily.

It localises to the cytoplasm. Functionally, one of the essential components for the initiation of protein synthesis. Protects formylmethionyl-tRNA from spontaneous hydrolysis and promotes its binding to the 30S ribosomal subunits. Also involved in the hydrolysis of GTP during the formation of the 70S ribosomal complex. The chain is Translation initiation factor IF-2 from Pseudomonas syringae pv. syringae (strain B728a).